Consider the following 657-residue polypeptide: DALGTGNAQKQQDINHLLDKIYEPTKYPDLKEIAENFNPLGDTSIYNDHGAAVETLMKELNDHRLLEQRHWYSLFNTRQRKEALMLFAVLNQCKEWYCFRSNAAYFRERMNEGEFVYALYVSVIHSKLGDGIVLPPLYQITPHMFTNSEVIDKAYSAKMTQKQGTFNVSFTGTKKNREQRVAYFGEDIGMNIHHVTWHMDFPFWWEDSYGYHLDRKGELFFWVHHQLTARFDFERLSNWLDPVDELHWDRIIREGFAPLTSYKYGGEFPVRPDNIHFEDVDGVAHVHDLEITESRIHEAIDHGYITDSDGHTIDIRQPKGIELLGDIIESSKYSSNVQYYGSLHNTAHVMLGRQGDPHGKFNLPPGVMEHFETATRDPSFFRLHKYMDNIFKKHTDSFPPYTHDNLEFSGMVVNGVAIDGELITFFDEFQYSLINAVDSGENIEDVEINARVHRLNHKEFTYKITMSNNNDGERLATFRIFLCPIEDNNGITLTLDEARWFCIELDKFFQKVPKGPETIERSSKDSSVTVPDMPSFQSLKEQADNAVNGGHDLDLSAYERSCGIPDRMLLPKSKPEGMEFNLYVAVTDGDKDTEGHNGGHDYGGTHAQCGVHGEAYPDNRPLGYPLERRIPDERVIDGVSNIKHVVVKIVHHLEHHD.

The cysteines at positions 93 and 98 are disulfide-linked. Asn-167 carries an N-linked (GlcNAc...) asparagine glycan. His-194, His-198, His-224, His-344, His-348, and His-384 together coordinate Cu cation. Intrachain disulfides connect Cys-483-Cys-502 and Cys-562-Cys-609. Residues 594 to 616 (EGHNGGHDYGGTHAQCGVHGEAY) form a disordered region.

Belongs to the tyrosinase family. Hemocyanin subfamily. As to quaternary structure, hexamer of a number of different chains, of which A, B, and C have been identified. Hemolymph.

The protein resides in the secreted. It is found in the extracellular space. Hemocyanins are copper-containing oxygen carriers occurring freely dissolved in the hemolymph of many mollusks and arthropods. This is Hemocyanin A chain from Panulirus interruptus (California spiny lobster).